Here is a 140-residue protein sequence, read N- to C-terminus: 3-hydroxyacyl-[acyl-carrier-protein] dehydratase FabZ (140 aa).

His-47 is a catalytic residue.

The protein belongs to the thioester dehydratase family. FabZ subfamily.

Its subcellular location is the cytoplasm. It carries out the reaction a (3R)-hydroxyacyl-[ACP] = a (2E)-enoyl-[ACP] + H2O. Its function is as follows. Involved in unsaturated fatty acids biosynthesis. Catalyzes the dehydration of short chain beta-hydroxyacyl-ACPs and long chain saturated and unsaturated beta-hydroxyacyl-ACPs. The sequence is that of 3-hydroxyacyl-[acyl-carrier-protein] dehydratase FabZ from Streptococcus pyogenes serotype M49 (strain NZ131).